Consider the following 1387-residue polypeptide: DNA-directed RNA polymerase subunit beta'' (1387 aa).

Residues Cys-224, Cys-295, Cys-302, and Cys-305 each coordinate Zn(2+). The tract at residues 883–903 (SHTGKRNDPAGSGLIPDNGSD) is disordered.

It belongs to the RNA polymerase beta' chain family. RpoC2 subfamily. In terms of assembly, in plastids the minimal PEP RNA polymerase catalytic core is composed of four subunits: alpha, beta, beta', and beta''. When a (nuclear-encoded) sigma factor is associated with the core the holoenzyme is formed, which can initiate transcription. Zn(2+) serves as cofactor.

It is found in the plastid. It localises to the chloroplast. It catalyses the reaction RNA(n) + a ribonucleoside 5'-triphosphate = RNA(n+1) + diphosphate. DNA-dependent RNA polymerase catalyzes the transcription of DNA into RNA using the four ribonucleoside triphosphates as substrates. This is DNA-directed RNA polymerase subunit beta'' from Platanus occidentalis (Sycamore).